A 481-amino-acid chain; its full sequence is Hyaluronidase-4 (481 aa).

The Cytoplasmic portion of the chain corresponds to 1 to 8 (MKVLSEGQ). The helical transmembrane segment at 9 to 29 (LKLCVVQPVHLTSWLLIFFIL) threads the bilayer. Residues 30–453 (KSISCLKPAR…ADCREIKTAD (424 aa)) lie on the Extracellular side of the membrane. 5 disulfides stabilise this stretch: C59–C351, C223–C237, C376–C387, C381–C435, and C437–C446. N-linked (GlcNAc...) asparagine glycosylation is found at N86 and N115. Residue E147 is the Proton donor of the active site. A glycan (N-linked (GlcNAc...) (complex) asparagine) is linked at N177. Residue N343 is glycosylated (N-linked (GlcNAc...) asparagine). Residues 454 to 474 (GCSGVSPSPGSLMTLCLLLLA) traverse the membrane as a helical segment. Over 475-481 (SYRSIQL) the chain is Cytoplasmic.

This sequence belongs to the glycosyl hydrolase 56 family. In terms of tissue distribution, detected in placenta and skeletal muscle.

It localises to the membrane. The enzyme catalyses Random hydrolysis of (1-&gt;4)-linkages between N-acetyl-beta-D-glucosamine and D-glucuronate residues in hyaluronate.. Functionally, endo-hyaluronidase that degrades hyaluronan to smaller oligosaccharide fragments. Also has chondroitin sulfate hydrolase activity, The best substrate being the galactosaminidic linkage in the sequence of a trisulfated tetrasaccharide. This chain is Hyaluronidase-4 (HYAL4), found in Homo sapiens (Human).